The chain runs to 302 residues: Sulfate adenylyltransferase subunit 2 (302 aa).

This sequence belongs to the PAPS reductase family. CysD subfamily. Heterodimer composed of CysD, the smaller subunit, and CysN.

The catalysed reaction is sulfate + ATP + H(+) = adenosine 5'-phosphosulfate + diphosphate. The protein operates within sulfur metabolism; hydrogen sulfide biosynthesis; sulfite from sulfate: step 1/3. With CysN forms the ATP sulfurylase (ATPS) that catalyzes the adenylation of sulfate producing adenosine 5'-phosphosulfate (APS) and diphosphate, the first enzymatic step in sulfur assimilation pathway. APS synthesis involves the formation of a high-energy phosphoric-sulfuric acid anhydride bond driven by GTP hydrolysis by CysN coupled to ATP hydrolysis by CysD. The chain is Sulfate adenylyltransferase subunit 2 from Zymomonas mobilis subsp. mobilis (strain ATCC 31821 / ZM4 / CP4).